The following is a 592-amino-acid chain: UvrABC system protein C (592 aa).

The GIY-YIG domain maps to 14-91; sequence KKPGCYLWKN…IKKHKPRYNI (78 aa). One can recognise a UVR domain in the interval 197–232; that stretch reads DQVLKDLKEKESIASEKFDFEQAKKYLDLQKAINLI.

This sequence belongs to the UvrC family. As to quaternary structure, interacts with UvrB in an incision complex.

The protein resides in the cytoplasm. Its function is as follows. The UvrABC repair system catalyzes the recognition and processing of DNA lesions. UvrC both incises the 5' and 3' sides of the lesion. The N-terminal half is responsible for the 3' incision and the C-terminal half is responsible for the 5' incision. In Mycoplasmoides gallisepticum (strain R(low / passage 15 / clone 2)) (Mycoplasma gallisepticum), this protein is UvrABC system protein C.